Here is an 868-residue protein sequence, read N- to C-terminus: mRNA-capping enzyme (868 aa).

K282 (N6-GMP-lysine intermediate) is an active-site residue. The mRNA cap 0 methyltransferase domain occupies 594 to 868; sequence GIYRAQTALI…LFGFICLRKN (275 aa). Residues K607, G624, D646, and 710 to 712 contribute to the S-adenosyl-L-methionine site; that span reads LFI.

In the N-terminal section; belongs to the dsDNA virus mRNA guanylyltransferase family. The protein in the C-terminal section; belongs to the class I-like SAM-binding methyltransferase superfamily. mRNA cap 0 methyltransferase family. As to quaternary structure, part of the viral DNA-directed RNA polymerase that consists of 8 polII-like subunits (RPB1, RPB2, RPB3, RPB5, RPB6, RPB7, RPB9, RPB10), a capping enzyme and a termination factor.

It is found in the virion. It carries out the reaction a 5'-end triphospho-ribonucleoside in mRNA + H2O = a 5'-end diphospho-ribonucleoside in mRNA + phosphate + H(+). It catalyses the reaction a 5'-end diphospho-ribonucleoside in mRNA + GTP + H(+) = a 5'-end (5'-triphosphoguanosine)-ribonucleoside in mRNA + diphosphate. The catalysed reaction is a 5'-end (5'-triphosphoguanosine)-ribonucleoside in mRNA + S-adenosyl-L-methionine = a 5'-end (N(7)-methyl 5'-triphosphoguanosine)-ribonucleoside in mRNA + S-adenosyl-L-homocysteine. It participates in mRNA processing; mRNA capping. Probably catalyzes the second reaction in the mRNA cap formation pathway. Forms a covalent complex with GTP. This is mRNA-capping enzyme from Ornithodoros (relapsing fever ticks).